The primary structure comprises 425 residues: (S)-6-hydroxynicotine oxidase (425 aa).

FAD-binding positions include serine 12, glutamate 31, glycine 38 to arginine 39, and glycine 56 to tyrosine 59. A (S)-6-hydroxynicotine-binding site is contributed by asparagine 166. FAD is bound at residue valine 226. Residues tyrosine 311, phenylalanine 326, and tryptophan 371 each coordinate (S)-6-hydroxynicotine. Residues serine 398 and glycine 406 to isoleucine 408 contribute to the FAD site. Position 407 (tyrosine 407) interacts with (S)-6-hydroxynicotine.

Belongs to the flavin monoamine oxidase family. Homodimer. FAD is required as a cofactor.

The protein resides in the cytoplasm. The catalysed reaction is (S)-6-hydroxynicotine + O2 + H2O = 6-hydroxypseudooxynicotine + H2O2. It catalyses the reaction (S)-6-hydroxynicotine + O2 = 6-hydroxy-N-methylmyosmine + H2O2. It participates in alkaloid degradation; nicotine degradation; 6-hydroxypseudooxynicotine from nicotine (S-isomer route): step 2/2. With respect to regulation, inhibited by (R)-6-hydroxynicotine. Inhibited by high concentrations of phenanthroline. Activity is strongly affected by Hg(2+) and p-chloromercuriphenylsulfonate, but not by N-ethylmaleimide and 5,5'-dithiobis-(2-nitrobenzoate). Involved in the degradation of L-nicotine. Catalyzes the oxidation of (S)-6-hydroxynicotine (6-hydroxy-L-nicotine) to 6-hydroxypseudooxynicotine. Oxidation of the pyrrolidine ring of (S)-6-hydroxynicotine leads to the formation of the optically inactive 6-hydroxy-N-methylmyosmine, which hydrolyzes spontaneously to 6-hydroxypseudooxynicotine. Acts with absolute stereospecificity on the L-form of 6-hydroxynicotine. Can also use (S)-6-hydroxynornicotine. This is (S)-6-hydroxynicotine oxidase from Paenarthrobacter nicotinovorans (Arthrobacter nicotinovorans).